Reading from the N-terminus, the 219-residue chain is Large ribosomal subunit protein uL1 (219 aa).

The protein belongs to the universal ribosomal protein uL1 family. As to quaternary structure, part of the 50S ribosomal subunit.

Functionally, binds directly to 23S rRNA. Probably involved in E site tRNA release. Protein L1 is also a translational repressor protein, it controls the translation of its operon by binding to its mRNA. The chain is Large ribosomal subunit protein uL1 from Pyrococcus horikoshii (strain ATCC 700860 / DSM 12428 / JCM 9974 / NBRC 100139 / OT-3).